Here is a 220-residue protein sequence, read N- to C-terminus: Peptidyl-tRNA hydrolase (220 aa).

A tRNA-binding site is contributed by Y14. H19 serves as the catalytic Proton acceptor. TRNA-binding residues include F66, N68, and N114. The tract at residues Q184 to V220 is disordered.

It belongs to the PTH family. As to quaternary structure, monomer.

Its subcellular location is the cytoplasm. It carries out the reaction an N-acyl-L-alpha-aminoacyl-tRNA + H2O = an N-acyl-L-amino acid + a tRNA + H(+). Hydrolyzes ribosome-free peptidyl-tRNAs (with 1 or more amino acids incorporated), which drop off the ribosome during protein synthesis, or as a result of ribosome stalling. In terms of biological role, catalyzes the release of premature peptidyl moieties from peptidyl-tRNA molecules trapped in stalled 50S ribosomal subunits, and thus maintains levels of free tRNAs and 50S ribosomes. The protein is Peptidyl-tRNA hydrolase of Deinococcus deserti (strain DSM 17065 / CIP 109153 / LMG 22923 / VCD115).